The sequence spans 245 residues: tRNA (guanine-N(1)-)-methyltransferase (245 aa).

S-adenosyl-L-methionine contacts are provided by residues G111 and 131 to 136; that span reads MGDYVL.

Belongs to the RNA methyltransferase TrmD family. In terms of assembly, homodimer.

The protein resides in the cytoplasm. The enzyme catalyses guanosine(37) in tRNA + S-adenosyl-L-methionine = N(1)-methylguanosine(37) in tRNA + S-adenosyl-L-homocysteine + H(+). Its function is as follows. Specifically methylates guanosine-37 in various tRNAs. This Staphylococcus epidermidis (strain ATCC 12228 / FDA PCI 1200) protein is tRNA (guanine-N(1)-)-methyltransferase.